The chain runs to 319 residues: 4-hydroxy-3-methylbut-2-enyl diphosphate reductase (319 aa).

[4Fe-4S] cluster is bound at residue C17. Residues H46 and H79 each contribute to the (2E)-4-hydroxy-3-methylbut-2-enyl diphosphate site. Dimethylallyl diphosphate contacts are provided by H46 and H79. 2 residues coordinate isopentenyl diphosphate: H46 and H79. C101 contacts [4Fe-4S] cluster. Residue H129 participates in (2E)-4-hydroxy-3-methylbut-2-enyl diphosphate binding. Residue H129 participates in dimethylallyl diphosphate binding. An isopentenyl diphosphate-binding site is contributed by H129. Residue E131 is the Proton donor of the active site. T170 is a binding site for (2E)-4-hydroxy-3-methylbut-2-enyl diphosphate. Position 200 (C200) interacts with [4Fe-4S] cluster. Positions 228, 229, 230, and 273 each coordinate (2E)-4-hydroxy-3-methylbut-2-enyl diphosphate. Dimethylallyl diphosphate is bound by residues S228, S229, N230, and S273. Isopentenyl diphosphate-binding residues include S228, S229, N230, and S273.

The protein belongs to the IspH family. [4Fe-4S] cluster serves as cofactor.

It catalyses the reaction isopentenyl diphosphate + 2 oxidized [2Fe-2S]-[ferredoxin] + H2O = (2E)-4-hydroxy-3-methylbut-2-enyl diphosphate + 2 reduced [2Fe-2S]-[ferredoxin] + 2 H(+). The catalysed reaction is dimethylallyl diphosphate + 2 oxidized [2Fe-2S]-[ferredoxin] + H2O = (2E)-4-hydroxy-3-methylbut-2-enyl diphosphate + 2 reduced [2Fe-2S]-[ferredoxin] + 2 H(+). It participates in isoprenoid biosynthesis; dimethylallyl diphosphate biosynthesis; dimethylallyl diphosphate from (2E)-4-hydroxy-3-methylbutenyl diphosphate: step 1/1. The protein operates within isoprenoid biosynthesis; isopentenyl diphosphate biosynthesis via DXP pathway; isopentenyl diphosphate from 1-deoxy-D-xylulose 5-phosphate: step 6/6. Its function is as follows. Catalyzes the conversion of 1-hydroxy-2-methyl-2-(E)-butenyl 4-diphosphate (HMBPP) into a mixture of isopentenyl diphosphate (IPP) and dimethylallyl diphosphate (DMAPP). Acts in the terminal step of the DOXP/MEP pathway for isoprenoid precursor biosynthesis. The protein is 4-hydroxy-3-methylbut-2-enyl diphosphate reductase of Cereibacter sphaeroides (strain ATCC 17025 / ATH 2.4.3) (Rhodobacter sphaeroides).